The primary structure comprises 498 residues: Type VI secretion system sheath protein TssC1 (498 aa).

In terms of assembly, forms a heterodimer with TssB1. Heterodimers assemble to form the sheath of the T6SS machinery. Interacts with TssA1.

Core component of the H1 type VI (H1-T6SS) secretion system that plays a role in the release of toxins targeting both eukaryotic and prokaryotic species. Forms the sheath of the structure by assembling into tubules together with TssB1 resulting in the stacking of cogwheel-like structures showing predominantly a 12-fold symmetry. The sheath contracts to provide the energy needed for effector delivery. The protein is Type VI secretion system sheath protein TssC1 of Pseudomonas aeruginosa (strain ATCC 15692 / DSM 22644 / CIP 104116 / JCM 14847 / LMG 12228 / 1C / PRS 101 / PAO1).